We begin with the raw amino-acid sequence, 227 residues long: Lysosomal-associated transmembrane protein 4B (227 aa).

The next 4 membrane-spanning stretches (helical) occupy residues isoleucine 26 to alanine 46, methionine 72 to glycine 92, tryptophan 100 to isoleucine 120, and cysteine 153 to isoleucine 173. Positions proline 205–proline 222 are required for NEDD4 interaction.

This sequence belongs to the LAPTM4/LAPTM5 transporter family. In terms of assembly, homooligomer; upon reaching the lysosomes. Interacts with MCOLN1. Interacts with NEDD4; may play a role in the lysosomal sorting of LAPTM4B; enhances HGS association with NEDD4; mediates inhibition of EGFR degradation. Interacts with PIP5K1C; promotes SNX5 association with LAPTM4B; kinase activity of PIP5K1C is required; interaction is regulated by phosphatidylinositol 4,5-bisphosphate generated by PIP5K1C. Interacts with HGS; promotes HGS ubiquitination. Interacts with SNX5. Interacts with SLC3A2 and SLC7A5; recruits SLC3A2 and SLC7A5 to lysosomes to promote leucine uptake into these organelles and is required for mTORC1 activation. Interacts with LRRC32; decreases TGFB1 production in regulatory T cells. Interacts with BECN1; competes with EGFR for LAPTM4B binding; regulates EGFR activity. Interacts with EGFR; positively correlates with EGFR activation. Post-translationally, undergoes proteolytic cleavage following delivery to the lysosomes. In terms of processing, ubiquitinated by NEDD4.

The protein resides in the endomembrane system. Its subcellular location is the late endosome membrane. The protein localises to the cell membrane. It is found in the cell projection. It localises to the lysosome membrane. The protein resides in the endosome membrane. Its subcellular location is the endosome. The protein localises to the multivesicular body membrane. It is found in the multivesicular body lumen. Its function is as follows. Required for optimal lysosomal function. Blocks EGF-stimulated EGFR intraluminal sorting and degradation. Conversely by binding with the phosphatidylinositol 4,5-bisphosphate, regulates its PIP5K1C interaction, inhibits HGS ubiquitination and relieves LAPTM4B inhibition of EGFR degradation. Recruits SLC3A2 and SLC7A5 (the Leu transporter) to the lysosome, promoting entry of leucine and other essential amino acid (EAA) into the lysosome, stimulating activation of proton-transporting vacuolar (V)-ATPase protein pump (V-ATPase) and hence mTORC1 activation. Plays a role as negative regulator of TGFB1 production in regulatory T cells. Binds ceramide and facilitates its exit from late endosome in order to control cell death pathways. This is Lysosomal-associated transmembrane protein 4B from Rattus norvegicus (Rat).